The primary structure comprises 382 residues: Carbamoyl phosphate synthase small chain (382 aa).

Residues 1-189 are CPSase; the sequence is MIKSALLVLE…GLPEAKSEDD (189 aa). Residues Ser47 and Gly241 each contribute to the L-glutamine site. A Glutamine amidotransferase type-1 domain is found at 193-380; that stretch reads HVVAYDFGAK…IELIKHYRSS (188 aa). The active-site Nucleophile is the Cys269. 5 residues coordinate L-glutamine: Leu270, Gln273, Asn311, Gly313, and Phe314. Active-site residues include His353 and Glu355.

It belongs to the CarA family. In terms of assembly, composed of two chains; the small (or glutamine) chain promotes the hydrolysis of glutamine to ammonia, which is used by the large (or ammonia) chain to synthesize carbamoyl phosphate. Tetramer of heterodimers (alpha,beta)4.

It catalyses the reaction hydrogencarbonate + L-glutamine + 2 ATP + H2O = carbamoyl phosphate + L-glutamate + 2 ADP + phosphate + 2 H(+). The catalysed reaction is L-glutamine + H2O = L-glutamate + NH4(+). It participates in amino-acid biosynthesis; L-arginine biosynthesis; carbamoyl phosphate from bicarbonate: step 1/1. It functions in the pathway pyrimidine metabolism; UMP biosynthesis via de novo pathway; (S)-dihydroorotate from bicarbonate: step 1/3. Small subunit of the glutamine-dependent carbamoyl phosphate synthetase (CPSase). CPSase catalyzes the formation of carbamoyl phosphate from the ammonia moiety of glutamine, carbonate, and phosphate donated by ATP, constituting the first step of 2 biosynthetic pathways, one leading to arginine and/or urea and the other to pyrimidine nucleotides. The small subunit (glutamine amidotransferase) binds and cleaves glutamine to supply the large subunit with the substrate ammonia. In Salmonella typhi, this protein is Carbamoyl phosphate synthase small chain.